The following is a 413-amino-acid chain: uncharacterized protein (413 aa).

The next 12 membrane-spanning stretches (helical) occupy residues 42 to 62, 75 to 95, 109 to 129, 133 to 153, 157 to 179, 191 to 211, 238 to 258, 265 to 285, 304 to 324, 326 to 346, 362 to 382, and 383 to 403; these read FLGG…LPVF, LSLS…GPLS, LIAA…VIVF, LTGL…VEEV, SVSF…GRIL, IAFI…LYFL, PTLL…ITIF, LMLS…IIYL, SSIL…TQYN, IFII…SHSI, ATSL…TFGG, and FFWF…ILIF.

This sequence belongs to the major facilitator superfamily.

The protein resides in the cell membrane. This is an uncharacterized protein from Buchnera aphidicola subsp. Schizaphis graminum (strain Sg).